Consider the following 126-residue polypeptide: Small ribosomal subunit protein uS12m (126 aa).

A compositionally biased stretch (polar residues) spans 1-11; the sequence is MATSNQMGANT. Residues 1 to 21 are disordered; the sequence is MATSNQMGANTRSKKKKKNLK. Basic residues predominate over residues 12–21; the sequence is RSKKKKKNLK.

The protein belongs to the universal ribosomal protein uS12 family.

The protein resides in the mitochondrion. Functionally, protein S12 is involved in the translation initiation step. The sequence is that of Small ribosomal subunit protein uS12m (RPS12) from Bigelowiella natans (Pedinomonas minutissima).